The primary structure comprises 198 residues: 8-oxoguanine DNA glycosylase/AP lyase (198 aa).

Residues lysine 122 and aspartate 140 contribute to the active site.

It belongs to the type-2 OGG1 family. As to quaternary structure, monomer.

The catalysed reaction is 2'-deoxyribonucleotide-(2'-deoxyribose 5'-phosphate)-2'-deoxyribonucleotide-DNA = a 3'-end 2'-deoxyribonucleotide-(2,3-dehydro-2,3-deoxyribose 5'-phosphate)-DNA + a 5'-end 5'-phospho-2'-deoxyribonucleoside-DNA + H(+). Functionally, catalyzes the excision of an oxidatively damaged form of guanine (7,8-dihydro-8-oxoguanine = 8-oxoG) from DNA. Also cleaves the DNA backbone at apurinic/apyrimidinic sites (AP sites). Efficiently cleaves oligomers containing 8-oxoG:C and 8-oxoG:G base pairs, and is less effective on oligomers containing 8-oxoG:T and 8-oxoG:A mispairs. The protein is 8-oxoguanine DNA glycosylase/AP lyase of Archaeoglobus fulgidus (strain ATCC 49558 / DSM 4304 / JCM 9628 / NBRC 100126 / VC-16).